Reading from the N-terminus, the 277-residue chain is Phosphate import ATP-binding protein PstB 1 (277 aa).

Residues 27–272 form the ABC transporter domain; the sequence is LRVRDLAVSY…PSHELTAAYI (246 aa). 59–66 serves as a coordination point for ATP; sequence GPSGCGKT.

This sequence belongs to the ABC transporter superfamily. Phosphate importer (TC 3.A.1.7) family. As to quaternary structure, the complex is composed of two ATP-binding proteins (PstB), two transmembrane proteins (PstC and PstA) and a solute-binding protein (PstS).

It localises to the cell inner membrane. The enzyme catalyses phosphate(out) + ATP + H2O = ADP + 2 phosphate(in) + H(+). Its function is as follows. Part of the ABC transporter complex PstSACB involved in phosphate import. Responsible for energy coupling to the transport system. This is Phosphate import ATP-binding protein PstB 1 from Nitrosococcus oceani (strain ATCC 19707 / BCRC 17464 / JCM 30415 / NCIMB 11848 / C-107).